Reading from the N-terminus, the 264-residue chain is Thiazole synthase (264 aa).

Catalysis depends on Lys106, which acts as the Schiff-base intermediate with DXP. 1-deoxy-D-xylulose 5-phosphate-binding positions include Gly167, 193-194 (AG), and 215-216 (NS).

This sequence belongs to the ThiG family. As to quaternary structure, homotetramer. Forms heterodimers with either ThiH or ThiS.

It is found in the cytoplasm. It catalyses the reaction [ThiS sulfur-carrier protein]-C-terminal-Gly-aminoethanethioate + 2-iminoacetate + 1-deoxy-D-xylulose 5-phosphate = [ThiS sulfur-carrier protein]-C-terminal Gly-Gly + 2-[(2R,5Z)-2-carboxy-4-methylthiazol-5(2H)-ylidene]ethyl phosphate + 2 H2O + H(+). The protein operates within cofactor biosynthesis; thiamine diphosphate biosynthesis. Catalyzes the rearrangement of 1-deoxy-D-xylulose 5-phosphate (DXP) to produce the thiazole phosphate moiety of thiamine. Sulfur is provided by the thiocarboxylate moiety of the carrier protein ThiS. In vitro, sulfur can be provided by H(2)S. The protein is Thiazole synthase of Ectopseudomonas mendocina (strain ymp) (Pseudomonas mendocina).